Here is a 426-residue protein sequence, read N- to C-terminus: MLQHQIVQSPARLGLTGPGSPSVQNPTPTRHGHPTSSSSSQSQHQQIQQQPNLLPSSTVAAASSASASAAVSSSALLSLLPPLPRAQALLQQMAVLTSKLFDVSPNRAIWLSAFRGSLPSFLSSHSLPPPPPLENPSPSSTKEILSQFNSLQTQLFEAVTELQEILDLQDAKQKVAREIKSKDSSLLAFANKLKDAERVLDMLVDDYSDYRKPKRSKIEEDDEDNDNESSSSSTTVSSQLKLKDILAYAHKISYTTFAPPEFGAGQAPLRGALPPAPQDEQMRASQLYTFADLDIGLPKTVENMEKKVEALIEPPPPPEAMDISAIHNLLPPNIAVPSGWKPGMPVELPRDLPLPPPGWKPGDPVVLPPLESIAAPRAEDHQHMRPSQGLHRPPDVIQVRAVQLDILEDDDSSDYSSDDASSDDED.

Residues 1 to 56 (MLQHQIVQSPARLGLTGPGSPSVQNPTPTRHGHPTSSSSSQSQHQQIQQQPNLLPS) are disordered. Polar residues predominate over residues 19-28 (GSPSVQNPTP). The span at 36 to 56 (SSSSSQSQHQQIQQQPNLLPS) shows a compositional bias: low complexity. Positions 160-212 (TELQEILDLQDAKQKVAREIKSKDSSLLAFANKLKDAERVLDMLVDDYSDYRK) form a coiled coil. Disordered stretches follow at residues 214 to 236 (KRSK…STTV) and 373 to 426 (IAAP…DDED). Residues 406-426 (ILEDDDSSDYSSDDASSDDED) show a composition bias toward acidic residues.

The protein belongs to the Mediator complex subunit 4 family. As to quaternary structure, component of the Mediator complex.

The protein localises to the nucleus. Its function is as follows. Component of the Mediator complex, a coactivator involved in the regulated transcription of nearly all RNA polymerase II-dependent genes. Mediator functions as a bridge to convey information from gene-specific regulatory proteins to the basal RNA polymerase II transcription machinery. The Mediator complex, having a compact conformation in its free form, is recruited to promoters by direct interactions with regulatory proteins and serves for the assembly of a functional preinitiation complex with RNA polymerase II and the general transcription factors. This Arabidopsis thaliana (Mouse-ear cress) protein is Mediator of RNA polymerase II transcription subunit 4 (MED4).